An 835-amino-acid polypeptide reads, in one-letter code: Serine/threonine-protein kinase TNNI3K (835 aa).

Residues 21-51 (SESYVITIERLEDDLQIKEKELTELRNIFGS) adopt a coiled-coil conformation. ANK repeat units follow at residues 66–96 (NGLSLLHLCCICGGKKSHIRTLMLKGLRPSR), 100–129 (NGFTALHLAVYKDNAELITSLLHSGADIQQ), 133–162 (GGLTALHIATIAGHLEAADVLLQHGANVNI), 166–195 (VFFTPLHIAAYYGHEQVTRLLLKFGADVNV), 199–228 (VGDRPLHLASAKGFLNIAKLLMEEGSKADV), 234–263 (EDHVPLHFCSRFGHHDIVKYLLQSDLEVQP), 269–298 (YGDTPLHLACYNGKFEVAKEIIQISGTESL), 304–335 (FSETAFHSACTYGKSIDLVKFLLDQNVININH), 339–368 (DGHTGLHSACYHGHIRLVQFLLDNGADMNL), and 381–410 (DEQTCLMWAYEKGHDAIVTLLKHYKRPQDE). Residues 463-723 (IEFHEIIGSG…EVVMKLEECL (261 aa)) form the Protein kinase domain. Residues 469-477 (IGSGSFGKV) and lysine 490 contribute to the ATP site. The active-site Proton acceptor is aspartate 588. A compositionally biased stretch (low complexity) spans 732–746 (ASSNSSGSLSPSSSS). A disordered region spans residues 732-751 (ASSNSSGSLSPSSSSDCLVN).

This sequence belongs to the protein kinase superfamily. TKL Ser/Thr protein kinase family. MAP kinase kinase kinase subfamily. In terms of assembly, interacts with TNNI3, ACTC1, ACTA1, MYBPC3, AIP, FABP3 and HADHB. Mg(2+) serves as cofactor. Autophosphorylated. As to expression, highly expressed in both adult and fetal heart.

It localises to the nucleus. The protein localises to the cytoplasm. The catalysed reaction is L-seryl-[protein] + ATP = O-phospho-L-seryl-[protein] + ADP + H(+). The enzyme catalyses L-threonyl-[protein] + ATP = O-phospho-L-threonyl-[protein] + ADP + H(+). May play a role in cardiac physiology. The sequence is that of Serine/threonine-protein kinase TNNI3K from Homo sapiens (Human).